The primary structure comprises 1030 residues: Halotolerance protein 9 (1030 aa).

The segment at residues 136-166 (CDHCRKRKIRCDEVDQQTKKCSNCIKFQLPC) is a DNA-binding region (zn(2)-C6 fungal-type). Residues 185–208 (HHATPGESLQTSNSISNPVASSSV) are disordered. Positions 196-208 (SNSISNPVASSSV) are enriched in low complexity. 2 positions are modified to phosphoserine: Ser221 and Ser937.

Its subcellular location is the cytoplasm. The protein localises to the nucleus. In terms of biological role, putative transcription factor involved in halotolerance. This Saccharomyces cerevisiae (strain ATCC 204508 / S288c) (Baker's yeast) protein is Halotolerance protein 9 (HAL9).